The primary structure comprises 492 residues: MGLYTLMVTFLCTIVLPVLLFLAAVKLWEMLMIRRVDPNCRSPLPPGTMGLPFIGETLQLILQRRKFLRMKRQKYGCIYKTHLFGNPTVRVMGADNVRQILLGEHKLVSVQWPASVRTILGSDTLSNVHGVQHKNKKKAIMRAFSRDALEHYIPVIQQEVKSAIQEWLQKDSCVLVYPEMKKLMFRIAMRILLGFEPEQIKTDEQELVEAFEEMIKNLFSLPIDVPFSGLYRGLRARNFIHSKIEENIRKKIQDDDNENEQKYKDALQLLIENSRRSDEPFSLQAMKEAATELLFGGHETTASTATSLVMFLGLNTEVVQKVREEVQEKVEMGMYTPGKGLSMELLDQLKYTGCVIKETLRINPPVPGGFRVALKTFELNGYQIPKGWNVIYSICDTHDVADVFPNKEEFQPERFMSKGLEDGSRFNYIPFGGGSRMCVGKEFAKVLLKIFLVELTQHCNWILSNGPPTMKTGPTIYPVDNLPTKFTSYVRN.

Cys-438 contacts heme.

It belongs to the cytochrome P450 family. Heme serves as cofactor.

The protein localises to the endoplasmic reticulum membrane. It is found in the microsome membrane. The enzyme catalyses all-trans-retinoate + reduced [NADPH--hemoprotein reductase] + O2 = all-trans-(4S)-hydroxyretinoate + oxidized [NADPH--hemoprotein reductase] + H2O + H(+). Its function is as follows. A cytochrome P450 monooxygenase involved in the metabolism of all-trans retinoic acid (atRA), a signaling molecule that binds to retinoic acid receptors and regulates gene transcription. Mechanistically, uses molecular oxygen inserting one oxygen atom into a substrate, and reducing the second into a water molecule, with two electrons provided by NADPH via cytochrome P450 reductase (CPR; NADPH-ferrihemoprotein reductase). Catalyzes the hydroxylation of carbon hydrogen bonds of atRA primarily at C-4. Has no activity toward 9-cis and 13-cis retinoic acid stereoisomers. May play a role in the oxidative metabolism of xenobiotics such as tazarotenic acid. The protein is Cytochrome P450 26A1 (cyp26a1) of Danio rerio (Zebrafish).